The chain runs to 279 residues: uncharacterized protein (279 aa).

A disordered region spans residues 136-279 (TSNATEASEK…FTSDSSDEED (144 aa)). A compositionally biased stretch (low complexity) spans 228–238 (NNGNGAVYSDS).

This is an uncharacterized protein from Invertebrate iridescent virus 3 (IIV-3).